The sequence spans 150 residues: Urease accessory protein UreE (150 aa).

Belongs to the UreE family.

It is found in the cytoplasm. Its function is as follows. Involved in urease metallocenter assembly. Binds nickel. Probably functions as a nickel donor during metallocenter assembly. This is Urease accessory protein UreE from Streptococcus vestibularis.